Consider the following 362-residue polypeptide: Phosphoserine aminotransferase (362 aa).

Residues S9 and R42 each contribute to the L-glutamate site. Pyridoxal 5'-phosphate contacts are provided by residues 76-77 (GR), W102, T153, D174, and Q197. At K198 the chain carries N6-(pyridoxal phosphate)lysine. Residue 239–240 (NT) participates in pyridoxal 5'-phosphate binding.

The protein belongs to the class-V pyridoxal-phosphate-dependent aminotransferase family. SerC subfamily. As to quaternary structure, homodimer. Pyridoxal 5'-phosphate serves as cofactor.

It is found in the cytoplasm. It catalyses the reaction O-phospho-L-serine + 2-oxoglutarate = 3-phosphooxypyruvate + L-glutamate. The catalysed reaction is 4-(phosphooxy)-L-threonine + 2-oxoglutarate = (R)-3-hydroxy-2-oxo-4-phosphooxybutanoate + L-glutamate. It participates in amino-acid biosynthesis; L-serine biosynthesis; L-serine from 3-phospho-D-glycerate: step 2/3. It functions in the pathway cofactor biosynthesis; pyridoxine 5'-phosphate biosynthesis; pyridoxine 5'-phosphate from D-erythrose 4-phosphate: step 3/5. Catalyzes the reversible conversion of 3-phosphohydroxypyruvate to phosphoserine and of 3-hydroxy-2-oxo-4-phosphonooxybutanoate to phosphohydroxythreonine. The polypeptide is Phosphoserine aminotransferase (Salmonella agona (strain SL483)).